Here is a 365-residue protein sequence, read N- to C-terminus: Histidinol-phosphate aminotransferase (365 aa).

N6-(pyridoxal phosphate)lysine is present on Lys220.

It belongs to the class-II pyridoxal-phosphate-dependent aminotransferase family. Histidinol-phosphate aminotransferase subfamily. As to quaternary structure, homodimer. It depends on pyridoxal 5'-phosphate as a cofactor.

It carries out the reaction L-histidinol phosphate + 2-oxoglutarate = 3-(imidazol-4-yl)-2-oxopropyl phosphate + L-glutamate. Its pathway is amino-acid biosynthesis; L-histidine biosynthesis; L-histidine from 5-phospho-alpha-D-ribose 1-diphosphate: step 7/9. The protein is Histidinol-phosphate aminotransferase of Xylella fastidiosa (strain 9a5c).